We begin with the raw amino-acid sequence, 342 residues long: Protein-glutamate methylesterase/protein-glutamine glutaminase 2 (342 aa).

Residues 2–119 form the Response regulatory domain; that stretch reads NIGIVNDLPL…GGSADPSQPL (118 aa). The residue at position 53 (D53) is a 4-aspartylphosphate. Residues 144 to 337 enclose the CheB-type methylesterase domain; it reads PAPQGALPPL…DQLISLVQRN (194 aa). Catalysis depends on residues S159, H186, and D279.

Belongs to the CheB family. Phosphorylated by CheA. Phosphorylation of the N-terminal regulatory domain activates the methylesterase activity.

The protein resides in the cytoplasm. The enzyme catalyses [protein]-L-glutamate 5-O-methyl ester + H2O = L-glutamyl-[protein] + methanol + H(+). The catalysed reaction is L-glutaminyl-[protein] + H2O = L-glutamyl-[protein] + NH4(+). In terms of biological role, involved in chemotaxis. Part of a chemotaxis signal transduction system that modulates chemotaxis in response to various stimuli. Catalyzes the demethylation of specific methylglutamate residues introduced into the chemoreceptors (methyl-accepting chemotaxis proteins or MCP) by CheR. Also mediates the irreversible deamidation of specific glutamine residues to glutamic acid. This chain is Protein-glutamate methylesterase/protein-glutamine glutaminase 2, found in Burkholderia mallei (strain ATCC 23344).